A 515-amino-acid polypeptide reads, in one-letter code: Vacuolar fusion protein CCZ1 homolog A (515 aa).

This sequence belongs to the CCZ1 family. As to quaternary structure, interacts with MON1.

The protein localises to the endosome. It is found in the prevacuolar compartment. Functionally, plays an important role in membrane trafficking through the secretory apparatus. In complex with MON1, acts as a guanine exchange factor (GEF) for RABG3F of the Rab7 protein family. Promotes the exchange of GDP to GTP, converting RABG3F from an inactive GDP-bound form into an active GTP-bound form. The RABG3F active form is involved in protein trafficking from prevacuolar compartments (PVCs) to vacuoles. May serve as a linker between Rab5 and Rab7 protein families in PVCs and mediate PVC maturation. The sequence is that of Vacuolar fusion protein CCZ1 homolog A from Arabidopsis thaliana (Mouse-ear cress).